Here is a 641-residue protein sequence, read N- to C-terminus: MAVIGALPKEVAEAVSASRLLVVGAGGIGCELLKNLVLTGFTNLDVIDLDTIDVSNLNRQFLFQKKHVGRSKAQVAKESVLQFCPDANITAYHDSIMNPDYNVEFFKQFTMAMNALDNNAARNHVNRMCLAAGIPLIESGTAGYLGQVSVIKKGVTECYECQPKPTQKTFPGCTIRNTPSEPIHCIVWAKYLFNQLFGEEDADQEVAPDIADPEAAWDPTKAAERANASNVDGDIKRVSTKQWAKSTGYDPIKLFNKLFRDDIKYLLTMDRLWRKRKPPIPLEWASLHNKENCSEIQNESSLLGLKDQKVLNVASYAQLFSKSVETLREQLREKGDGAELVWDKDDVPAMDFVTAAANLRMHIFSMNMKSKFDVKSMAGNIIPAIATTNAVISGLIVLEGLKILSGNTEQCRTVFLNKQPNPRKKLLVPCSLDPPNPSCYVCAIKPEVTVKLNVHKVTVQMLQDKILKEKFAMVAPDVQIEDGKGTILISSEAGETDANNHRKISEFGIRNSSQLQADDFLQDYTLMMNILHSDEMEKDVDFEVVGDVPEKGPQKPPEESVKNITNGSDDGAQPSTSKAQDQDDVLIVDSDEESPSSSNADVGMESASLKRKLPDEEAVSSTKRKRIEPPVEEDDDIIALD.

Residues 24-29, Asp-48, 56-59, Lys-72, 95-96, and 117-122 each bind ATP; these read GAGGIG, NLNR, SI, and DNNAAR. 2 residues coordinate Zn(2+): Cys-158 and Cys-161. Catalysis depends on Cys-173, which acts as the Glycyl thioester intermediate. Zn(2+) contacts are provided by Cys-439 and Cys-442. The segment at 546 to 641 is disordered; sequence GDVPEKGPQK…EEDDDIIALD (96 aa). Residues 548 to 561 are compositionally biased toward basic and acidic residues; sequence VPEKGPQKPPEESV. Polar residues predominate over residues 562 to 579; sequence KNITNGSDDGAQPSTSKA. Composition is skewed to acidic residues over residues 582-594 and 630-641; these read QDDV…DEES and PVEEDDDIIALD.

This sequence belongs to the ubiquitin-activating E1 family. In terms of assembly, heterodimer of sae1 and uba2/sae2. The heterodimer corresponds to the two domains that are encoded on a single polypeptide chain in ubiquitin-activating enzyme E1. Interacts with ube2i.

The protein localises to the nucleus. It functions in the pathway protein modification; protein sumoylation. Its function is as follows. The heterodimer acts as an E1 ligase for sumo1, sumo2, and sumo3. It mediates ATP-dependent activation of sumo proteins followed by formation of a thioester bond between a sumo protein and a conserved active site cysteine residue on uba2/sae2. This is SUMO-activating enzyme subunit 2-A (uba2-a) from Xenopus laevis (African clawed frog).